An 83-amino-acid chain; its full sequence is High-potential iron-sulfur protein (83 aa).

[4Fe-4S] cluster-binding residues include Cys43, Cys46, Cys61, and Cys75.

The protein belongs to the high-potential iron-sulfur protein (HiPIP) family. Homodimer.

Specific class of high-redox-potential 4Fe-4S ferredoxins. Functions in anaerobic electron transport in most purple and in some other photosynthetic bacteria and in at least one genus (Paracoccus) of halophilic, denitrifying bacteria. In Thermochromatium tepidum (Chromatium tepidum), this protein is High-potential iron-sulfur protein (hip).